Reading from the N-terminus, the 268-residue chain is 4-hydroxy-tetrahydrodipicolinate reductase (268 aa).

Residues 8–13 and Glu-34 contribute to the NAD(+) site; that span reads GGGGKM. Lys-35 contributes to the NADP(+) binding site. NAD(+) is bound by residues 98–100 and 122–125; these read GST and APNM. The active-site Proton donor/acceptor is the His-155. Residue His-156 participates in (S)-2,3,4,5-tetrahydrodipicolinate binding. The active-site Proton donor is the Lys-159. (S)-2,3,4,5-tetrahydrodipicolinate is bound at residue 165–166; sequence GT.

The protein belongs to the DapB family.

The protein resides in the cytoplasm. It carries out the reaction (S)-2,3,4,5-tetrahydrodipicolinate + NAD(+) + H2O = (2S,4S)-4-hydroxy-2,3,4,5-tetrahydrodipicolinate + NADH + H(+). The enzyme catalyses (S)-2,3,4,5-tetrahydrodipicolinate + NADP(+) + H2O = (2S,4S)-4-hydroxy-2,3,4,5-tetrahydrodipicolinate + NADPH + H(+). It participates in amino-acid biosynthesis; L-lysine biosynthesis via DAP pathway; (S)-tetrahydrodipicolinate from L-aspartate: step 4/4. Functionally, catalyzes the conversion of 4-hydroxy-tetrahydrodipicolinate (HTPA) to tetrahydrodipicolinate. The polypeptide is 4-hydroxy-tetrahydrodipicolinate reductase (Syntrophus aciditrophicus (strain SB)).